The chain runs to 123 residues: Large ribosomal subunit protein uL14 (123 aa).

The protein belongs to the universal ribosomal protein uL14 family. As to quaternary structure, part of the 50S ribosomal subunit. Forms a cluster with proteins L3 and L19. In the 70S ribosome, L14 and L19 interact and together make contacts with the 16S rRNA in bridges B5 and B8.

In terms of biological role, binds to 23S rRNA. Forms part of two intersubunit bridges in the 70S ribosome. In Escherichia coli O6:K15:H31 (strain 536 / UPEC), this protein is Large ribosomal subunit protein uL14.